Consider the following 440-residue polypeptide: Chromosome partition protein MukF (440 aa).

Residues 208 to 236 (LSETSGTLRELQDTLEAAGDKLQANLLRI) are leucine-zipper.

The protein belongs to the MukF family. In terms of assembly, interacts, and probably forms a ternary complex, with MukE and MukB via its C-terminal region. The complex formation is stimulated by calcium or magnesium. It is required for an interaction between MukE and MukB.

The protein resides in the cytoplasm. The protein localises to the nucleoid. In terms of biological role, involved in chromosome condensation, segregation and cell cycle progression. May participate in facilitating chromosome segregation by condensation DNA from both sides of a centrally located replisome during cell division. Not required for mini-F plasmid partitioning. Probably acts via its interaction with MukB and MukE. Overexpression results in anucleate cells. It has a calcium binding activity. This Escherichia coli (strain ATCC 8739 / DSM 1576 / NBRC 3972 / NCIMB 8545 / WDCM 00012 / Crooks) protein is Chromosome partition protein MukF.